A 272-amino-acid chain; its full sequence is 2-C-methyl-D-erythritol 4-phosphate cytidylyltransferase (272 aa).

Belongs to the IspD/TarI cytidylyltransferase family. IspD subfamily.

The enzyme catalyses 2-C-methyl-D-erythritol 4-phosphate + CTP + H(+) = 4-CDP-2-C-methyl-D-erythritol + diphosphate. It participates in isoprenoid biosynthesis; isopentenyl diphosphate biosynthesis via DXP pathway; isopentenyl diphosphate from 1-deoxy-D-xylulose 5-phosphate: step 2/6. In terms of biological role, catalyzes the formation of 4-diphosphocytidyl-2-C-methyl-D-erythritol from CTP and 2-C-methyl-D-erythritol 4-phosphate (MEP). This Xanthomonas oryzae pv. oryzae (strain PXO99A) protein is 2-C-methyl-D-erythritol 4-phosphate cytidylyltransferase.